The sequence spans 106 residues: MIPGEVITPETDIELNVGRETLKVVVANLGDRPIQVGSHFHFYEANDALQFDREAVKGFRLNIAAGTAIRFEPGQSREVELVALAGKREVYGFAGRVMGRLDENVD.

It belongs to the urease beta subunit family. As to quaternary structure, heterotrimer of UreA (gamma), UreB (beta) and UreC (alpha) subunits. Three heterotrimers associate to form the active enzyme.

It is found in the cytoplasm. The catalysed reaction is urea + 2 H2O + H(+) = hydrogencarbonate + 2 NH4(+). It participates in nitrogen metabolism; urea degradation; CO(2) and NH(3) from urea (urease route): step 1/1. The chain is Urease subunit beta from Acinetobacter baumannii (strain ATCC 17978 / DSM 105126 / CIP 53.77 / LMG 1025 / NCDC KC755 / 5377).